The sequence spans 321 residues: Lipoyl synthase (321 aa).

[4Fe-4S] cluster is bound by residues C68, C73, C79, C94, C98, C101, and S308. One can recognise a Radical SAM core domain in the interval 80 to 297 (FNHGTATFMI…KALADELGFT (218 aa)).

It belongs to the radical SAM superfamily. Lipoyl synthase family. The cofactor is [4Fe-4S] cluster.

It is found in the cytoplasm. It carries out the reaction [[Fe-S] cluster scaffold protein carrying a second [4Fe-4S](2+) cluster] + N(6)-octanoyl-L-lysyl-[protein] + 2 oxidized [2Fe-2S]-[ferredoxin] + 2 S-adenosyl-L-methionine + 4 H(+) = [[Fe-S] cluster scaffold protein] + N(6)-[(R)-dihydrolipoyl]-L-lysyl-[protein] + 4 Fe(3+) + 2 hydrogen sulfide + 2 5'-deoxyadenosine + 2 L-methionine + 2 reduced [2Fe-2S]-[ferredoxin]. It participates in protein modification; protein lipoylation via endogenous pathway; protein N(6)-(lipoyl)lysine from octanoyl-[acyl-carrier-protein]: step 2/2. In terms of biological role, catalyzes the radical-mediated insertion of two sulfur atoms into the C-6 and C-8 positions of the octanoyl moiety bound to the lipoyl domains of lipoate-dependent enzymes, thereby converting the octanoylated domains into lipoylated derivatives. In Shewanella baltica (strain OS223), this protein is Lipoyl synthase.